Here is a 2163-residue protein sequence, read N- to C-terminus: Myosin-VIIa (2163 aa).

A Myosin motor domain is found at Q58–D728. G151–T158 is a binding site for ATP. Actin-binding stretches follow at residues L607–E629 and Q707–L721. 4 IQ domains span residues L731–R753, M754–R783, L800–L822, and K823–R852. Residues R886–D914 adopt a coiled-coil conformation. Residues P937–L958 are disordered. The region spanning Y1003–K1239 is the MyTH4 1 domain. In terms of domain architecture, FERM 1 spans I1244–S1554. One can recognise an SH3 domain in the interval K1552–S1621. One can recognise a MyTH4 2 domain in the interval Y1697–Q1845. The region spanning I1851–M2154 is the FERM 2 domain.

Belongs to the TRAFAC class myosin-kinesin ATPase superfamily. Myosin family. In terms of assembly, homodimerizes in a two headed molecule through the formation of a coiled-coil rod.

The protein localises to the cytoplasm. Its function is as follows. Myosins are actin-based motor molecules with ATPase activity. Unconventional myosins serve in intracellular movements: can function in cells as a single-molecule cargo transporter. A very slow and high-duty-ratio motor, may be suitable for tension maintenance of actin filaments. Their highly divergent tails are presumed to bind to membranous compartments, which would be moved relative to actin filaments. Plays a key role in the formation of cellular projections and other actin-based functions required for embryonic and larval viability. Necessary for auditory transduction: plays a role in Johnston organ (JO) organization by functioning in scolopidial apical attachment and therefore to acoustic stimulus propagation from the antenna a2/a3 joint to transducing elements. The sequence is that of Myosin-VIIa from Aedes aegypti (Yellowfever mosquito).